The sequence spans 138 residues: Large ribosomal subunit protein uL16 (138 aa).

A compositionally biased stretch (basic residues) spans 1–13; that stretch reads MLQPSRRKYRKEQ. The disordered stretch occupies residues 1-20; it reads MLQPSRRKYRKEQKGRNTGL.

It belongs to the universal ribosomal protein uL16 family. As to quaternary structure, part of the 50S ribosomal subunit.

In terms of biological role, binds 23S rRNA and is also seen to make contacts with the A and possibly P site tRNAs. This Bordetella avium (strain 197N) protein is Large ribosomal subunit protein uL16.